The chain runs to 242 residues: Floral homeotic protein AGAMOUS (242 aa).

The region spanning 19–73 (RGKIEIKRIENTTNRQVTFCKRRNGLLKKAYELSVLCDAEVALIVFSTRGRLYEY) is the MADS-box domain. Residues 103–193 (AQFYQQEASK…RAKIAENERA (91 aa)) form the K-box domain.

In terms of tissue distribution, flower. Preferentially expressed in stamen and carpel and weakly in petal. Undetected in leaves and roots.

It is found in the nucleus. Probable transcription factor involved in regulating genes that determines stamen and carpel development in wild-type flowers. This Panax ginseng (Korean ginseng) protein is Floral homeotic protein AGAMOUS (AG2).